The following is a 343-amino-acid chain: Glucokinase (343 aa).

21-26 (ADVGGT) provides a ligand contact to ATP.

Belongs to the bacterial glucokinase family.

It localises to the cytoplasm. The catalysed reaction is D-glucose + ATP = D-glucose 6-phosphate + ADP + H(+). In Cupriavidus pinatubonensis (strain JMP 134 / LMG 1197) (Cupriavidus necator (strain JMP 134)), this protein is Glucokinase.